A 243-amino-acid chain; its full sequence is MKMHIARDSIVFLLNKHLQNTILTNKIEQECFLQADTPKKYLQYIKPFLINCMTKNITTDLVMKDSKRLEPYIILEMRDIIQMMFFRTLQKHIFFKKHTDLCTEYAQKIEASCYHYTYQQQEKTFLEEYSTRCGTINHIINCEKKSHQQQDNDALNKLISGELKPEAIGSMTFAELCPSAALKEKTEITLRSQQKVAEKTSQLYKCPNCKQRMCTYREVQTRALDEPSTIFCTCKKCGHEFIG.

The TFIIS central domain occupies 77-201 (MRDIIQMMFF…SQQKVAEKTS (125 aa)). A TFIIS-type zinc finger spans residues 202 to 242 (QLYKCPNCKQRMCTYREVQTRALDEPSTIFCTCKKCGHEFI). Zn(2+) contacts are provided by C206, C209, C234, and C237.

This sequence belongs to the TFS-II family.

In terms of biological role, putative initiation factor. Necessary for efficient transcription elongation past template-encoded arresting sites. The sequence is that of Transcription factor TFIIS homolog from Ornithodoros (relapsing fever ticks).